The primary structure comprises 155 residues: Protein SprT-like (155 aa).

The 138-residue stretch at 7-144 folds into the SprT-like domain; sequence QRHMEEVSLQ…CGSCGGKLKQ (138 aa). His67 is a binding site for Zn(2+). Glu68 is an active-site residue. Residue His71 participates in Zn(2+) binding.

This sequence belongs to the SprT family. It depends on Zn(2+) as a cofactor.

The protein resides in the cytoplasm. The sequence is that of Protein SprT-like from Listeria welshimeri serovar 6b (strain ATCC 35897 / DSM 20650 / CCUG 15529 / CIP 8149 / NCTC 11857 / SLCC 5334 / V8).